Reading from the N-terminus, the 348-residue chain is Phospho-2-dehydro-3-deoxyheptonate aldolase, Trp-sensitive (348 aa).

It belongs to the class-I DAHP synthase family.

The catalysed reaction is D-erythrose 4-phosphate + phosphoenolpyruvate + H2O = 7-phospho-2-dehydro-3-deoxy-D-arabino-heptonate + phosphate. The protein operates within metabolic intermediate biosynthesis; chorismate biosynthesis; chorismate from D-erythrose 4-phosphate and phosphoenolpyruvate: step 1/7. Stereospecific condensation of phosphoenolpyruvate (PEP) and D-erythrose-4-phosphate (E4P) giving rise to 3-deoxy-D-arabino-heptulosonate-7-phosphate (DAHP). This chain is Phospho-2-dehydro-3-deoxyheptonate aldolase, Trp-sensitive (aroH), found in Escherichia coli O157:H7.